Reading from the N-terminus, the 432-residue chain is Adenylosuccinate synthetase (432 aa).

Residues 12–18 (GDEGKGK) and 40–42 (GHT) contribute to the GTP site. Residue Asp13 is the Proton acceptor of the active site. Mg(2+) is bound by residues Asp13 and Gly40. IMP is bound by residues 13–16 (DEGK), 38–41 (NAGH), Thr129, Arg143, Gln224, Thr239, and Arg303. The active-site Proton donor is His41. 299-305 (VTTGRRR) is a substrate binding site. Residues Arg305, 331–333 (KLD), and 413–415 (GVG) each bind GTP.

The protein belongs to the adenylosuccinate synthetase family. In terms of assembly, homodimer. It depends on Mg(2+) as a cofactor.

The protein localises to the cytoplasm. The catalysed reaction is IMP + L-aspartate + GTP = N(6)-(1,2-dicarboxyethyl)-AMP + GDP + phosphate + 2 H(+). Its pathway is purine metabolism; AMP biosynthesis via de novo pathway; AMP from IMP: step 1/2. In terms of biological role, plays an important role in the de novo pathway of purine nucleotide biosynthesis. Catalyzes the first committed step in the biosynthesis of AMP from IMP. This Mycobacterium avium (strain 104) protein is Adenylosuccinate synthetase.